A 369-amino-acid chain; its full sequence is Terpene cyclase DEP1 (369 aa).

Helical transmembrane passes span 9–29, 82–102, 118–138, 157–177, 190–210, 234–254, 298–318, and 342–362; these read FFYLSALGIWGLWVYAFFNGM, LLFFDVNYVVACANLWVLIES, AMVLCNANGAAIVLPLYLYLV, ALLVSTVVILLQPLLIFVPAW, IALFQVAPIGVSVFHLGLASI, LVLAGTVAAAVHSYTVVGALI, LFSQWDWIVVALTSVLYSHLL, and LVYLTVATIILGPGGAASFAL.

The protein belongs to the membrane-bound ascI terpene cyclase family.

The protein resides in the membrane. It participates in polyketide biosynthesis. In terms of biological role, part of the gene cluster that mediates the biosynthesis of depudecin, a highly oxidized eleven-carbon linear polyketide that acts as a histone deacetylase (HDAC) inhibitor and makes a small contribution to pathogenesis. The reducing polyketide synthase DEP5 is the central enzyme in depudecin biosynthesis by yielding the backbone polyketide chain. The monooxygenases DEP2 and DEP4, as well as the uncharacterized protein DEP1, then act as tailoring enzymes to modify the intermediate polyketide chain into depudecin. This Alternaria brassicicola (Dark leaf spot agent) protein is Terpene cyclase DEP1.